The sequence spans 218 residues: Hypoxanthine-guanine phosphoribosyltransferase (218 aa).

Position 2 is an N-acetylalanine (A2). K69 contributes to the GMP binding site. An N6-acetyllysine modification is found at K103. K115 participates in a covalent cross-link: Glycyl lysine isopeptide (Lys-Gly) (interchain with G-Cter in SUMO1); alternate. K115 is covalently cross-linked (Glycyl lysine isopeptide (Lys-Gly) (interchain with G-Cter in SUMO2); alternate). GMP is bound by residues E134–T142, K166, K186–V188, and D194. Residue D138 is the Proton acceptor of the active site. At T142 the chain carries Phosphothreonine. D194 is a binding site for Mg(2+).

Belongs to the purine/pyrimidine phosphoribosyltransferase family. In terms of assembly, homotetramer. Mg(2+) serves as cofactor.

It is found in the cytoplasm. It catalyses the reaction IMP + diphosphate = hypoxanthine + 5-phospho-alpha-D-ribose 1-diphosphate. The enzyme catalyses GMP + diphosphate = guanine + 5-phospho-alpha-D-ribose 1-diphosphate. Its pathway is purine metabolism; IMP biosynthesis via salvage pathway; IMP from hypoxanthine: step 1/1. Its function is as follows. Converts guanine to guanosine monophosphate, and hypoxanthine to inosine monophosphate. Transfers the 5-phosphoribosyl group from 5-phosphoribosylpyrophosphate onto the purine. Plays a central role in the generation of purine nucleotides through the purine salvage pathway. This Canis lupus familiaris (Dog) protein is Hypoxanthine-guanine phosphoribosyltransferase (HPRT1).